The chain runs to 403 residues: Subtilisin-like protease CPC735_035780 (403 aa).

A signal peptide spans 1 to 19 (MSIMKIATLFFAALSAVEA). A propeptide spanning residues 20–117 (AKLLTPSDKR…VEPDRRVHLT (98 aa)) is cleaved from the precursor. Positions 35–116 (SYIVVMKDNV…YVEPDRRVHL (82 aa)) constitute an Inhibitor I9 domain. In terms of domain architecture, Peptidase S8 spans 127–403 (SWGLGRISHR…NKLLYNNSGR (277 aa)). Residues aspartate 159 and histidine 190 each act as charge relay system in the active site. 2 N-linked (GlcNAc...) asparagine glycosylation sites follow: asparagine 233 and asparagine 251. Serine 349 functions as the Charge relay system in the catalytic mechanism. The N-linked (GlcNAc...) asparagine glycan is linked to asparagine 399.

Belongs to the peptidase S8 family.

The protein resides in the secreted. Secreted subtilisin-like serine protease with keratinolytic activity that contributes to pathogenicity. This chain is Subtilisin-like protease CPC735_035780, found in Coccidioides posadasii (strain C735) (Valley fever fungus).